Consider the following 469-residue polypeptide: Spliceosome-associated protein CWC27 homolog (469 aa).

The residue at position 2 (Ser2) is an N-acetylserine. A PPIase cyclophilin-type domain is found at Thr11–Val166. Over residues Thr175–Lys193 the composition is skewed to basic and acidic residues. 2 disordered regions span residues Thr175–Gly415 and Arg428–Arg469. Residues Ser206–Ser229 adopt a coiled-coil conformation. The segment covering Ser231–His241 has biased composition (basic and acidic residues). Residues Thr256–Glu278 are compositionally biased toward acidic residues. 2 stretches are compositionally biased toward basic and acidic residues: residues Gly302 to Glu341 and Glu356 to Arg368. Residues Ala309–Gln371 are a coiled coil. Over residues Ala384–Asn403 the composition is skewed to polar residues. Basic and acidic residues predominate over residues Arg454–Arg469.

The protein belongs to the cyclophilin-type PPIase family. In terms of assembly, part of the activated spliceosome B/catalytic step 1 spliceosome, one of the forms of the spliceosome which has a well-formed active site but still cannot catalyze the branching reaction and is composed at least of 52 proteins, the U2, U5 and U6 snRNAs and the pre-mRNA. Recruited during early steps of activated spliceosome B maturation, it is probably one of the first proteins released from this complex as he matures to the spliceosome C complex. Component of the minor spliceosome, which splices U12-type introns.

The protein resides in the nucleus. Its function is as follows. As part of the spliceosome, plays a role in pre-mRNA splicing. Probable inactive PPIase with no peptidyl-prolyl cis-trans isomerase activity. As a component of the minor spliceosome, involved in the splicing of U12-type introns in pre-mRNAs. The sequence is that of Spliceosome-associated protein CWC27 homolog from Mus musculus (Mouse).